A 231-amino-acid chain; its full sequence is 5'-methylthioadenosine/S-adenosylhomocysteine nucleosidase (231 aa).

E12 (proton acceptor) is an active-site residue. Substrate is bound by residues G78, M153, and 174-175; that span reads ME. Residue D198 is the Proton donor of the active site.

Belongs to the PNP/UDP phosphorylase family. MtnN subfamily.

It carries out the reaction S-adenosyl-L-homocysteine + H2O = S-(5-deoxy-D-ribos-5-yl)-L-homocysteine + adenine. The enzyme catalyses S-methyl-5'-thioadenosine + H2O = 5-(methylsulfanyl)-D-ribose + adenine. The catalysed reaction is 5'-deoxyadenosine + H2O = 5-deoxy-D-ribose + adenine. Its pathway is amino-acid biosynthesis; L-methionine biosynthesis via salvage pathway; S-methyl-5-thio-alpha-D-ribose 1-phosphate from S-methyl-5'-thioadenosine (hydrolase route): step 1/2. Functionally, catalyzes the irreversible cleavage of the glycosidic bond in both 5'-methylthioadenosine (MTA) and S-adenosylhomocysteine (SAH/AdoHcy) to adenine and the corresponding thioribose, 5'-methylthioribose and S-ribosylhomocysteine, respectively. Also cleaves 5'-deoxyadenosine, a toxic by-product of radical S-adenosylmethionine (SAM) enzymes, into 5-deoxyribose and adenine. The polypeptide is 5'-methylthioadenosine/S-adenosylhomocysteine nucleosidase (Bacillus cytotoxicus (strain DSM 22905 / CIP 110041 / 391-98 / NVH 391-98)).